The sequence spans 43 residues: Protein PsbN (43 aa).

The helical transmembrane segment at 5–27 threads the bilayer; it reads TLVAISISGLLVSFTGYALYTAF.

This sequence belongs to the PsbN family.

It localises to the plastid. It is found in the chloroplast thylakoid membrane. Functionally, may play a role in photosystem I and II biogenesis. This is Protein PsbN from Houttuynia cordata (Chameleon plant).